The following is a 322-amino-acid chain: Eukaryotic translation initiation factor 3 subunit I (322 aa).

WD repeat units lie at residues 4–43, 46–85, 141–180, 184–223, and 281–322; these read GHERSITQIKYNREGDLLFSSSKDQKPNVWYSLNGERLGT, GHQGAVWCLDVDWESRKLITAGGDMTAKLWDVEYGTVIAS, MTESKITSMLWGPLDETIITGHDNGNIAIWDVRKGQKVVD, DHTGVINDMQLSKDGTMFVTASKDATAKLFDSETLMCLKT, and GHFG…NIFE.

Belongs to the eIF-3 subunit I family. Component of the eukaryotic translation initiation factor 3 (eIF-3) complex. The eIF-3 complex interacts with pix.

It localises to the cytoplasm. Functionally, component of the eukaryotic translation initiation factor 3 (eIF-3) complex, which is involved in protein synthesis of a specialized repertoire of mRNAs and, together with other initiation factors, stimulates binding of mRNA and methionyl-tRNAi to the 40S ribosome. The eIF-3 complex specifically targets and initiates translation of a subset of mRNAs involved in cell proliferation. The polypeptide is Eukaryotic translation initiation factor 3 subunit I (Drosophila willistoni (Fruit fly)).